The sequence spans 297 residues: 4-hydroxy-tetrahydrodipicolinate synthase (297 aa).

Thr49 lines the pyruvate pocket. The active-site Proton donor/acceptor is the Tyr137. The active-site Schiff-base intermediate with substrate is the Lys166. Residue Ile208 participates in pyruvate binding.

Belongs to the DapA family. In terms of assembly, homotetramer; dimer of dimers.

The protein localises to the cytoplasm. The catalysed reaction is L-aspartate 4-semialdehyde + pyruvate = (2S,4S)-4-hydroxy-2,3,4,5-tetrahydrodipicolinate + H2O + H(+). The protein operates within amino-acid biosynthesis; L-lysine biosynthesis via DAP pathway; (S)-tetrahydrodipicolinate from L-aspartate: step 3/4. Functionally, catalyzes the condensation of (S)-aspartate-beta-semialdehyde [(S)-ASA] and pyruvate to 4-hydroxy-tetrahydrodipicolinate (HTPA). This is 4-hydroxy-tetrahydrodipicolinate synthase from Phocaeicola vulgatus (strain ATCC 8482 / DSM 1447 / JCM 5826 / CCUG 4940 / NBRC 14291 / NCTC 11154) (Bacteroides vulgatus).